Consider the following 797-residue polypeptide: LPS-assembly protein LptD (797 aa).

An N-terminal signal peptide occupies residues 1-20; the sequence is MHTIRCLILSALSVAGAAQA. Residues 23-45 are disordered; that stretch reads SQDAAPAGRQPVGSVASPGLEMP.

Belongs to the LptD family. Component of the lipopolysaccharide transport and assembly complex. Interacts with LptE and LptA.

It is found in the cell outer membrane. Its function is as follows. Together with LptE, is involved in the assembly of lipopolysaccharide (LPS) at the surface of the outer membrane. The sequence is that of LPS-assembly protein LptD from Bordetella avium (strain 197N).